The chain runs to 83 residues: Cytochrome b559 subunit alpha (83 aa).

The chain crosses the membrane as a helical span at residues 21–35 (VIHSITIPSLFIAGW). Position 23 (His23) interacts with heme.

Belongs to the PsbE/PsbF family. Heterodimer of an alpha subunit and a beta subunit. PSII is composed of 1 copy each of membrane proteins PsbA, PsbB, PsbC, PsbD, PsbE, PsbF, PsbH, PsbI, PsbJ, PsbK, PsbL, PsbM, PsbT, PsbX, PsbY, PsbZ, Psb30/Ycf12, at least 3 peripheral proteins of the oxygen-evolving complex and a large number of cofactors. It forms dimeric complexes. The cofactor is heme b.

It is found in the plastid. It localises to the chloroplast thylakoid membrane. In terms of biological role, this b-type cytochrome is tightly associated with the reaction center of photosystem II (PSII). PSII is a light-driven water:plastoquinone oxidoreductase that uses light energy to abstract electrons from H(2)O, generating O(2) and a proton gradient subsequently used for ATP formation. It consists of a core antenna complex that captures photons, and an electron transfer chain that converts photonic excitation into a charge separation. This is Cytochrome b559 subunit alpha from Acorus calamus (Sweet flag).